We begin with the raw amino-acid sequence, 87 residues long: Acylphosphatase (87 aa).

Positions 2–87 (RLTALVSGTV…ATGLRDFHVY (86 aa)) constitute an Acylphosphatase-like domain. Residues R17 and N35 contribute to the active site.

The protein belongs to the acylphosphatase family.

It carries out the reaction an acyl phosphate + H2O = a carboxylate + phosphate + H(+). The sequence is that of Acylphosphatase (acyP) from Deinococcus geothermalis (strain DSM 11300 / CIP 105573 / AG-3a).